Consider the following 1216-residue polypeptide: ATP-dependent helicase/nuclease subunit A (1216 aa).

The region spanning 26-488 (QKKTAEQIEA…ILLKANFRSS (463 aa)) is the UvrD-like helicase ATP-binding domain. An ATP-binding site is contributed by 47 to 54 (ASAGSGKT). The 288-residue stretch at 515-802 (KHQLVFANTK…ELMTIHKSKG (288 aa)) folds into the UvrD-like helicase C-terminal domain.

It belongs to the helicase family. AddA subfamily. In terms of assembly, heterodimer of AddA and AddB/RexB. It depends on Mg(2+) as a cofactor.

It carries out the reaction Couples ATP hydrolysis with the unwinding of duplex DNA by translocating in the 3'-5' direction.. It catalyses the reaction ATP + H2O = ADP + phosphate + H(+). Its function is as follows. The heterodimer acts as both an ATP-dependent DNA helicase and an ATP-dependent, dual-direction single-stranded exonuclease. Recognizes the chi site generating a DNA molecule suitable for the initiation of homologous recombination. The AddA nuclease domain is required for chi fragment generation; this subunit has the helicase and 3' -&gt; 5' nuclease activities. This chain is ATP-dependent helicase/nuclease subunit A, found in Streptococcus pneumoniae (strain ATCC 700669 / Spain 23F-1).